The chain runs to 248 residues: ATP synthase subunit a, chloroplastic (248 aa).

The next 5 membrane-spanning stretches (helical) occupy residues glutamine 39–valine 59, valine 96–phenylalanine 116, isoleucine 135–threonine 155, leucine 200–leucine 220, and glycine 221–glycine 241.

This sequence belongs to the ATPase A chain family. In terms of assembly, F-type ATPases have 2 components, CF(1) - the catalytic core - and CF(0) - the membrane proton channel. CF(1) has five subunits: alpha(3), beta(3), gamma(1), delta(1), epsilon(1). CF(0) has four main subunits: a, b, b' and c.

The protein localises to the plastid. It localises to the chloroplast thylakoid membrane. Its function is as follows. Key component of the proton channel; it plays a direct role in the translocation of protons across the membrane. In Pelargonium hortorum (Common geranium), this protein is ATP synthase subunit a, chloroplastic.